Consider the following 181-residue polypeptide: SRP-independent targeting protein 2 (181 aa).

At 1 to 15 the chain is on the cytoplasmic side; it reads MAGKAGRKQASSNAK. A helical transmembrane segment spans residues 16-36; it reads IIQGLYKQVSLFLGMAIVRLF. Over 37 to 45 the chain is Lumenal; that stretch reads ISRKVTIGQ. A helical membrane pass occupies residues 46–66; it reads WIKLVALNVPMFVALYIIVLS. Topologically, residues 67–89 are cytoplasmic; that stretch reads GKPKYDGNRVVKQGIDLNDNTNL. Residues 90-110 form a helical membrane-spanning segment; it reads ISYFFDLIYLSLFGNIGIIAF. At 111–112 the chain is on the lumenal side; the sequence is RT. Residues 113–133 traverse the membrane as a helical segment; sequence FKFWWCLLLCPIYAGYKLYGL. Over 134–181 the chain is Cytoplasmic; the sequence is KNMFMPGAQQTQADNRSKNANEGQSKSKRQMKRERRGETDSKIKYKYR. Over residues 144-157 the composition is skewed to polar residues; the sequence is TQADNRSKNANEGQ. The segment at 144–181 is disordered; the sequence is TQADNRSKNANEGQSKSKRQMKRERRGETDSKIKYKYR. The segment covering 168–181 has biased composition (basic and acidic residues); that stretch reads RRGETDSKIKYKYR.

It belongs to the TMEM208 family. As to quaternary structure, interacts with SND1, PHO88/SND3 and the translocon complex subunit SEC61. ENV10/SND2 and PHO88/SND3 form a complex with the translocon in the endoplasmic reticulum membrane.

It localises to the endoplasmic reticulum membrane. In terms of biological role, functions in the SND pathway, a SRP (signal recognition particle) and GET (guided entry of tail-anchored proteins) independent pathway for targeting a broad range of substrate proteins to the endoplasmic reticulum. SND functions in parallel to GET in targeting proteins with downstream hydrophobic motifs. Involved in vacuolar processing and morphology. The protein is SRP-independent targeting protein 2 of Saccharomyces cerevisiae (strain ATCC 204508 / S288c) (Baker's yeast).